Here is a 388-residue protein sequence, read N- to C-terminus: MKAATLSEAGVSREILVIGSGFAAQQLVKSLRKLDAEQPIRLITADSGDEYNKPDLSHVVSRGCTAAAMTRLSGSDFAEQQRIALVPHCPVLGIDPARRIVMTVQGEFAYGQLVLATGASAARPDLPGSEQLVTLNSQQEYAAAEGPIQQARRILVLGAGLIGCELAMDMASDGREVTLVDLADSPLSALLPAVLSQPLQQALRSQGVSLQFGLGIARIDAQPGDGWRVTLTDGRTSEQDLVIAAIGLKPNLVLAQAAGLAVERGILVDDSLQTSAPHIFALGDCAQWRGQLLPFLQPIVLGANALARTLLGTPTPLTLPPMLVKVKTPRYPLQLAGRTKGEDLAWQCRWNSHGLVAEARAEDGELCGFVVGGDQMSAAFPLLRQLPR.

Belongs to the FAD-dependent oxidoreductase family. The cofactor is FAD.

The protein resides in the cytoplasm. The catalysed reaction is 2 reduced [nitric oxide reductase rubredoxin domain] + NAD(+) + H(+) = 2 oxidized [nitric oxide reductase rubredoxin domain] + NADH. It functions in the pathway nitrogen metabolism; nitric oxide reduction. Functionally, one of at least two accessory proteins for anaerobic nitric oxide (NO) reductase. Reduces the rubredoxin moiety of NO reductase. The chain is Nitric oxide reductase FlRd-NAD(+) reductase from Aeromonas salmonicida (strain A449).